A 266-amino-acid polypeptide reads, in one-letter code: Interleukin-1 beta (266 aa).

The propeptide occupies 1 to 113 (MATVPEPINE…ETSSDELLCD (113 aa)).

It belongs to the IL-1 family. In terms of assembly, monomer. In its precursor form, weakly interacts with full-length MEFV; the mature cytokine does not interact at all. Interacts with integrins ITGAV:ITGBV and ITGA5:ITGB1; integrin-binding is required for IL1B signaling. Interacts with cargo receptor TMED10; the interaction is direct and is required for the secretion of IL1B mature form. Interacts with HSP90AB1; the interaction facilitates cargo translocation into the ERGIC. Interacts with HSP90B1; the interaction facilitates cargo translocation into the ERGIC.

Its subcellular location is the cytoplasm. The protein resides in the cytosol. It localises to the secreted. It is found in the lysosome. The protein localises to the extracellular exosome. Functionally, potent pro-inflammatory cytokine. Initially discovered as the major endogenous pyrogen, induces prostaglandin synthesis, neutrophil influx and activation, T-cell activation and cytokine production, B-cell activation and antibody production, and fibroblast proliferation and collagen production. Promotes Th17 differentiation of T-cells. Synergizes with IL12/interleukin-12 to induce IFNG synthesis from T-helper 1 (Th1) cells. Plays a role in angiogenesis by inducing VEGF production synergistically with TNF and IL6. Involved in transduction of inflammation downstream of pyroptosis: its mature form is specifically released in the extracellular milieu by passing through the gasdermin-D (GSDMD) pore. The chain is Interleukin-1 beta (IL1B) from Ovis aries (Sheep).